A 293-amino-acid polypeptide reads, in one-letter code: MYVADVPARLLAVHAHPDDESLTMAGTLAGAALAGAEVTLVTATLGEEGEVIGDELQGLIAARADQLGGYRLTELAAAGAALGVRERVMLGGLGAFRDSGMAGTPSAEHPRAFIRAQRGGPDHDRAARALAREIDRVRPHVLLTYDEDGGYGHPDHVAVHQVVLAALPLAAWPVPRVLAVIRPRTVTQADFAALTTPPGYLAAAADEVGFLAADDSVAVAVPVTAAAARRRAALAAHATQVELLPGEVFALSNRIAQPLPAAEYFRVLAGSPVPVGPDWTVPADVAAGLDLDR.

H16, D19, and H156 together coordinate Zn(2+).

It belongs to the MshB deacetylase family. It depends on Zn(2+) as a cofactor.

It carries out the reaction 1D-myo-inositol 2-acetamido-2-deoxy-alpha-D-glucopyranoside + H2O = 1D-myo-inositol 2-amino-2-deoxy-alpha-D-glucopyranoside + acetate. Functionally, catalyzes the deacetylation of 1D-myo-inositol 2-acetamido-2-deoxy-alpha-D-glucopyranoside (GlcNAc-Ins) in the mycothiol biosynthesis pathway. The sequence is that of 1D-myo-inositol 2-acetamido-2-deoxy-alpha-D-glucopyranoside deacetylase from Nakamurella multipartita (strain ATCC 700099 / DSM 44233 / CIP 104796 / JCM 9543 / NBRC 105858 / Y-104) (Microsphaera multipartita).